A 305-amino-acid polypeptide reads, in one-letter code: UDP-3-O-acyl-N-acetylglucosamine deacetylase (305 aa).

Zn(2+) is bound by residues His-78, His-237, and Asp-241. The active-site Proton donor is His-264.

This sequence belongs to the LpxC family. Zn(2+) serves as cofactor.

The catalysed reaction is a UDP-3-O-[(3R)-3-hydroxyacyl]-N-acetyl-alpha-D-glucosamine + H2O = a UDP-3-O-[(3R)-3-hydroxyacyl]-alpha-D-glucosamine + acetate. Its pathway is glycolipid biosynthesis; lipid IV(A) biosynthesis; lipid IV(A) from (3R)-3-hydroxytetradecanoyl-[acyl-carrier-protein] and UDP-N-acetyl-alpha-D-glucosamine: step 2/6. Its function is as follows. Catalyzes the hydrolysis of UDP-3-O-myristoyl-N-acetylglucosamine to form UDP-3-O-myristoylglucosamine and acetate, the committed step in lipid A biosynthesis. In Cupriavidus taiwanensis (strain DSM 17343 / BCRC 17206 / CCUG 44338 / CIP 107171 / LMG 19424 / R1) (Ralstonia taiwanensis (strain LMG 19424)), this protein is UDP-3-O-acyl-N-acetylglucosamine deacetylase.